The chain runs to 192 residues: Putative manganese efflux pump MntP (192 aa).

Helical transmembrane passes span 2 to 22, 41 to 61, 62 to 82, 109 to 129, 136 to 156, and 172 to 192; these read IAII…AFAV, SALW…YAAS, AFSA…LAFI, MLPL…SLAF, FAIL…LYIG, and GVVL…VIAF.

This sequence belongs to the MntP (TC 9.B.29) family.

The protein resides in the cell membrane. Functionally, probably functions as a manganese efflux pump. This is Putative manganese efflux pump MntP from Bifidobacterium longum subsp. infantis (strain ATCC 15697 / DSM 20088 / JCM 1222 / NCTC 11817 / S12).